A 252-amino-acid chain; its full sequence is 29 kDa protein (252 aa).

The segment at 222–252 (YDGPYRPATTRPKSLLSSEDVKRASNKKNSS) is disordered.

The protein is 29 kDa protein of Beta vulgaris (Sugar beet).